A 363-amino-acid polypeptide reads, in one-letter code: Adenylate cyclase 2 (363 aa).

Residues 157-286 (VFLFIDLAGS…DTVNTTARLE (130 aa)) enclose the Guanylate cyclase domain. Mg(2+) is bound by residues Asp-162 and Asp-206. The interval 341–363 (GDGATEPAGETVRSPAAEAFTSL) is disordered.

Belongs to the adenylyl cyclase class-3 family. Mg(2+) is required as a cofactor.

The enzyme catalyses ATP = 3',5'-cyclic AMP + diphosphate. Its function is as follows. Plays essential roles in regulation of cellular metabolism by catalyzing the synthesis of a second messenger, cAMP. The sequence is that of Adenylate cyclase 2 (cya2) from Rhizobium meliloti (strain 1021) (Ensifer meliloti).